A 695-amino-acid polypeptide reads, in one-letter code: D-(-)-3-hydroxybutyrate oligomer hydrolase (695 aa).

The N-terminal stretch at M1 to A17 is a signal peptide. The Charge relay system role is filled by S308.

It belongs to the D-(-)-3-hydroxybutyrate oligomer hydrolase family.

It is found in the secreted. The enzyme catalyses (3R)-hydroxybutanoate dimer + H2O = 2 (R)-3-hydroxybutanoate + H(+). It participates in lipid metabolism; butanoate metabolism. Its function is as follows. Participates in the degradation of poly-3-hydroxybutyrate (PHB). It works downstream of poly(3-hydroxybutyrate) depolymerase, hydrolyzing D(-)-3-hydroxybutyrate oligomers of various length (3HB-oligomers) into 3HB-monomers. This is D-(-)-3-hydroxybutyrate oligomer hydrolase from Burkholderia ambifaria (strain ATCC BAA-244 / DSM 16087 / CCUG 44356 / LMG 19182 / AMMD) (Burkholderia cepacia (strain AMMD)).